The primary structure comprises 520 residues: Probable kinase 098L (520 aa).

The region spanning 82–393 (LTSVQSFGSK…NSPLLKKGFV (312 aa)) is the Protein kinase domain. Residues 88-96 (FGSKSKQGI) and Lys111 contribute to the ATP site. Residue Asp205 is the Proton acceptor of the active site. Residues 416-442 (QTAQLIETDKEILDNLIDDLELKIVRK) are a coiled coil.

The protein belongs to the protein kinase superfamily.

In terms of biological role, probable kinase. This chain is Probable kinase 098L, found in Aedes vexans (Inland floodwater mosquito).